The following is a 553-amino-acid chain: MNIIDQVKQTLVEEIAASINKAGLADEIPDIKIEVPKDTKNGDYATNIAMVLTKIAKRNPREIAQAIVDNLDTEKAHVKQIDIAGPGFINFYLDNQYLTAIIPEAIEKGDQFGHVNESKGQNVLLEYVSANPTGDLHIGHARNAAVGDALANILTAAGYNVTREYYINDAGNQITNLARSIETRFFEALGDNSYSMPEDGYNGKDIIEIGKDLAEKHPEIKDYSEEARLKEFRKLGVEYEMAKLKNDLAEFNTHFDNWFSETSLYEKGEILEVLAKMKELGYTYEADGATWLRTTDFKDDKDRVLIKNDGTYTYFLPDIAYHFDKVKRGNDILIDLFGADHHGYINRLKASLETFGVDSNRLEIQIMQMVRLMENGKEVKMSKRTGNAITLREIMDEVGVDAARYFLTMRSPDSHFDFDMELAKEQSQDNPVYYAQYAHARICSILKQAKEQGIEVTAANDFTTITNEKAIELLKKVADFEPTIESAAEHRSAHRITNYIQDLAAHFHKFYNAEKVLTDDIEKTKAHVAMIEAVRITLKNALAMVGVSAPESM.

The 'HIGH' region signature appears at proline 132–histidine 140.

The protein belongs to the class-I aminoacyl-tRNA synthetase family. As to quaternary structure, monomer.

The protein localises to the cytoplasm. It carries out the reaction tRNA(Arg) + L-arginine + ATP = L-arginyl-tRNA(Arg) + AMP + diphosphate. In Staphylococcus aureus (strain N315), this protein is Arginine--tRNA ligase.